The primary structure comprises 370 residues: Anhydro-N-acetylmuramic acid kinase (370 aa).

13–20 (GTSMDGVD) is an ATP binding site.

It belongs to the anhydro-N-acetylmuramic acid kinase family.

The enzyme catalyses 1,6-anhydro-N-acetyl-beta-muramate + ATP + H2O = N-acetyl-D-muramate 6-phosphate + ADP + H(+). Its pathway is amino-sugar metabolism; 1,6-anhydro-N-acetylmuramate degradation. It participates in cell wall biogenesis; peptidoglycan recycling. Catalyzes the specific phosphorylation of 1,6-anhydro-N-acetylmuramic acid (anhMurNAc) with the simultaneous cleavage of the 1,6-anhydro ring, generating MurNAc-6-P. Is required for the utilization of anhMurNAc either imported from the medium or derived from its own cell wall murein, and thus plays a role in cell wall recycling. This chain is Anhydro-N-acetylmuramic acid kinase, found in Vibrio parahaemolyticus serotype O3:K6 (strain RIMD 2210633).